The primary structure comprises 214 residues: Thiamine-phosphate synthase (214 aa).

Residues 37 to 41 and Asn-69 each bind 4-amino-2-methyl-5-(diphosphooxymethyl)pyrimidine; that span reads QLRDK. Mg(2+) is bound by residues Asp-70 and Asp-89. Ser-108 contributes to the 4-amino-2-methyl-5-(diphosphooxymethyl)pyrimidine binding site. 134-136 contributes to the 2-[(2R,5Z)-2-carboxy-4-methylthiazol-5(2H)-ylidene]ethyl phosphate binding site; it reads TDS. Lys-137 provides a ligand contact to 4-amino-2-methyl-5-(diphosphooxymethyl)pyrimidine. 2-[(2R,5Z)-2-carboxy-4-methylthiazol-5(2H)-ylidene]ethyl phosphate-binding positions include Gly-167 and 187-188; that span reads IS.

The protein belongs to the thiamine-phosphate synthase family. The cofactor is Mg(2+).

It carries out the reaction 2-[(2R,5Z)-2-carboxy-4-methylthiazol-5(2H)-ylidene]ethyl phosphate + 4-amino-2-methyl-5-(diphosphooxymethyl)pyrimidine + 2 H(+) = thiamine phosphate + CO2 + diphosphate. It catalyses the reaction 2-(2-carboxy-4-methylthiazol-5-yl)ethyl phosphate + 4-amino-2-methyl-5-(diphosphooxymethyl)pyrimidine + 2 H(+) = thiamine phosphate + CO2 + diphosphate. The catalysed reaction is 4-methyl-5-(2-phosphooxyethyl)-thiazole + 4-amino-2-methyl-5-(diphosphooxymethyl)pyrimidine + H(+) = thiamine phosphate + diphosphate. Its pathway is cofactor biosynthesis; thiamine diphosphate biosynthesis; thiamine phosphate from 4-amino-2-methyl-5-diphosphomethylpyrimidine and 4-methyl-5-(2-phosphoethyl)-thiazole: step 1/1. In terms of biological role, condenses 4-methyl-5-(beta-hydroxyethyl)thiazole monophosphate (THZ-P) and 2-methyl-4-amino-5-hydroxymethyl pyrimidine pyrophosphate (HMP-PP) to form thiamine monophosphate (TMP). In Natronomonas pharaonis (strain ATCC 35678 / DSM 2160 / CIP 103997 / JCM 8858 / NBRC 14720 / NCIMB 2260 / Gabara) (Halobacterium pharaonis), this protein is Thiamine-phosphate synthase.